A 1273-amino-acid chain; its full sequence is Protein sax-3 (1273 aa).

Positions 1–23 (MFNRKTLLCTILLVLQAVIRSFC) are cleaved as a signal peptide. Ig-like C2-type domains follow at residues 31 to 127 (PVII…GSLK), 133 to 222 (EDFR…ARLS), 227 to 312 (PKFE…AHLR), 317 to 411 (PSFQ…LKVT), and 425 to 511 (PTIE…ASLT). 5 cysteine pairs are disulfide-bonded: cysteine 52–cysteine 110, cysteine 154–cysteine 205, cysteine 248–cysteine 296, cysteine 338–cysteine 393, and cysteine 446–cysteine 495. Fibronectin type-III domains are found at residues 533-628 (SPTQ…TSKP), 653-750 (QLIK…TAEA), and 755-849 (PPED…MNQD). The chain crosses the membrane as a helical span at residues 874–894 (VPVIVIVAILIIFVVIIIAYC). The segment at 1033-1273 (APAMPTNPVP…NNGIVTQEQT (241 aa)) is disordered. Residues 1037-1046 (PTNPVPPEPP) are compositionally biased toward pro residues. A compositionally biased stretch (polar residues) spans 1096 to 1105 (QLHSSDGTGS). The span at 1106–1115 (SKERTGERRT) shows a compositional bias: basic and acidic residues. Over residues 1125–1136 (IPPPPSNPPPPG) the composition is skewed to pro residues. The segment covering 1145–1156 (QTATRRQLNRGS) has biased composition (polar residues). Positions 1207–1222 (MDDDGGSSEADGENSE) are enriched in acidic residues. The span at 1240 to 1273 (SASTLAHSCYGTNGTAQRFRSIPRNNGIVTQEQT) shows a compositional bias: polar residues.

Belongs to the immunoglobulin superfamily. ROBO/SAX3 family. In terms of tissue distribution, expressed in the AVG interneuron and the male-specific sensory neuron HOA.

It localises to the membrane. In terms of biological role, required to confine migrating sex myoblasts to the ventral muscle quadrants during their migration through the body and for multiple aspects of sensory, motor, and interneuron axon guidance. The chain is Protein sax-3 from Caenorhabditis elegans.